Here is a 1401-residue protein sequence, read N- to C-terminus: DNA-directed RNA polymerase subunit beta' (1401 aa).

4 residues coordinate Zn(2+): C70, C72, C85, and C88. Residues D460, D462, and D464 each coordinate Mg(2+). Zn(2+)-binding residues include C808, C882, C889, and C892.

The protein belongs to the RNA polymerase beta' chain family. The RNAP catalytic core consists of 2 alpha, 1 beta, 1 beta' and 1 omega subunit. When a sigma factor is associated with the core the holoenzyme is formed, which can initiate transcription. Mg(2+) is required as a cofactor. The cofactor is Zn(2+).

The enzyme catalyses RNA(n) + a ribonucleoside 5'-triphosphate = RNA(n+1) + diphosphate. Its function is as follows. DNA-dependent RNA polymerase catalyzes the transcription of DNA into RNA using the four ribonucleoside triphosphates as substrates. In Legionella pneumophila (strain Corby), this protein is DNA-directed RNA polymerase subunit beta'.